Reading from the N-terminus, the 311-residue chain is p-hydroxybenzoic acid efflux pump subunit AaeA (311 aa).

The helical transmembrane segment at 11-31 (VGITVLVVVLAVIAIFNVWAF) threads the bilayer.

The protein belongs to the membrane fusion protein (MFP) (TC 8.A.1) family.

Its subcellular location is the cell inner membrane. Forms an efflux pump with AaeB. The sequence is that of p-hydroxybenzoic acid efflux pump subunit AaeA from Yersinia pseudotuberculosis serotype O:1b (strain IP 31758).